We begin with the raw amino-acid sequence, 240 residues long: Insulin-like growth factor-binding protein 3 receptor (240 aa).

The signal sequence occupies residues 1–38 (MGSCQAGHNLHLCLAHHPPLVCATLILLLLGLSGLGLG). The Extracellular segment spans residues 39–204 (GFLLTHTTGL…SEELALCGSR (166 aa)). N-linked (GlcNAc...) asparagine glycosylation is present at Asn-167. The chain crosses the membrane as a helical span at residues 205–225 (VLGLGFFLVLLCGLLCCTTAV). Topologically, residues 226–240 (CFHPRPEFHWSRTRL) are cytoplasmic.

Interacts with IGFBP3. Interacts with CASP8.

It localises to the cell membrane. Functionally, cell death receptor specific for IGFBP3, may mediate caspase-8-dependent apoptosis upon ligand binding. The chain is Insulin-like growth factor-binding protein 3 receptor (Tmem219) from Mus musculus (Mouse).